A 257-amino-acid chain; its full sequence is Kallikrein-1 (257 aa).

The first 18 residues, 1 to 18 (MWFLVLCLALSLGGTGRA), serve as a signal peptide directing secretion. Residues 19 to 24 (PPIQSR) constitute a propeptide, activation peptide. The 230-residue stretch at 25-254 (IVGGWECSQP…YVKWIEDTIA (230 aa)) folds into the Peptidase S1 domain. 5 disulfides stabilise this stretch: cysteine 31–cysteine 169, cysteine 47–cysteine 63, cysteine 148–cysteine 215, cysteine 180–cysteine 194, and cysteine 205–cysteine 230. Histidine 62 acts as the Charge relay system in catalysis. Serine 90 carries O-linked (GalNAc...) serine glycosylation. An N-linked (GlcNAc...) asparagine glycan is attached at asparagine 99. O-linked (GalNAc...) serine glycosylation occurs at serine 101. N-linked (GlcNAc...) asparagine glycosylation is present at asparagine 105. The active-site Charge relay system is aspartate 116. Residue asparagine 160 is glycosylated (N-linked (GlcNAc...) asparagine). Residue serine 162 is glycosylated (O-linked (GalNAc...) serine). Serine 209 serves as the catalytic Charge relay system.

The protein belongs to the peptidase S1 family. Kallikrein subfamily.

It catalyses the reaction Preferential cleavage of Arg-|-Xaa bonds in small molecule substrates. Highly selective action to release kallidin (lysyl-bradykinin) from kininogen involves hydrolysis of Met-|-Xaa or Leu-|-Xaa.. Functionally, glandular kallikreins cleave Met-Lys and Arg-Ser bonds in kininogen to release Lys-bradykinin. In Macaca fascicularis (Crab-eating macaque), this protein is Kallikrein-1 (KLK1).